The chain runs to 616 residues: Zinc metalloproteinase-disintegrin-like protein H3 (616 aa).

The signal sequence occupies residues 1–20 (MIQVLLVIICLAVFPYQGSS). Residues 21 to 193 (IILESGNVND…KKASQLNLTP (173 aa)) constitute a propeptide that is removed on maturation. Pyrrolidone carboxylic acid (Glu) is present on Glu194. The Peptidase M12B domain maps to 203-399 (KYIKLVIVAD…KMPQCILNKP (197 aa)). 3 disulfides stabilise this stretch: Cys314-Cys394, Cys354-Cys378, and Cys356-Cys361. Position 339 (His339) interacts with Zn(2+). The short motif at 339-350 (HEMGHNLGMDHD) is the Metal-binding element. Catalysis depends on Glu340, which acts as the Proton acceptor. Zn(2+) is bound by residues His343 and His349. N-linked (GlcNAc...) asparagine glycosylation occurs at Asn377. The Disintegrin domain maps to 407–493 (PAVCGNYLVE…ECPTDQFQRN (87 aa)). Residues Val409, Asn412, Glu416, Glu419, and Asp422 each contribute to the Ca(2+) site. Intrachain disulfides connect Cys410–Cys439, Cys421–Cys434, Cys423–Cys429, Cys433–Cys456, Cys447–Cys453, Cys452–Cys478, Cys465–Cys485, Cys472–Cys504, Cys497–Cys509, Cys516–Cys566, Cys531–Cys577, Cys544–Cys554, Cys561–Cys603, and Cys597–Cys609. The short motif at 471–473 (ECD) is the D/ECD-tripeptide element. Residues Asp473, Asp476, and Asp488 each contribute to the Ca(2+) site. Asn506 carries N-linked (GlcNAc...) asparagine glycosylation.

Belongs to the venom metalloproteinase (M12B) family. P-III subfamily. P-IIIc sub-subfamily. As to quaternary structure, homodimer; disulfide-linked. Requires Zn(2+) as cofactor. In terms of processing, N-glycosylated. Post-translationally, the N-terminus is blocked. As to expression, expressed by the venom gland (at protein level). Expressed by the venom gland.

The protein localises to the secreted. With respect to regulation, the proteolytic activity requires Zn(2+) and Ca(2+) ions. The alpha-fibrinogenase activity is completely inhibited by EDTA, but not by PMSF. Its function is as follows. Zinc metalloprotease that has fibrinogenolytic and hemorrhagic activities. Cleaves insulin B chain readily at '38-Ala-|-Leu-39' bond, and at a significantly slower rate, at '40-Tyr-|-Leu-41' bond. Hydrolyzes isolated extracellular matrix (ECM) bovine fibronectin, and basal membrane (BM) proteins human collagen IV and, to a lesser extent, murine laminin, in vitro. Cleaves murine nidogen (at '350-Ser-|-Phe-351' and '380-Tyr-|-Asn-381' bonds), but not laminin, in a solubilized BM preparation. Hydrolyzes plasma proteins involved in blood coagulation in vitro. It significantly prolongs thrombin time. Has potent alpha-fibrinogenase activity cleaving human fibrinogen alpha chain at '432-Lys-|-Leu-433' bond, but does not cleave beta or gamma chains. Hydrolyzes bovine prothrombin, but does not cleave it at '366-Arg-|-Ile-367' bond, which is necessary for the formation of active alpha-thrombin, however, the cleavage of fragment 1 from it leads to reduced alpha-thrombin formation. Hydrolyzes bovine factor X heavy chain at '211-Ser-|-Leu-212', '213-Asp-|-Leu-214' and '216-Gly-|-Leu-217' bonds activating it only marginally as does not cleave at the physiological activation site. Does not cleave factor X light chain. No hydrolysis or activation of plasminogen. The alpha-fibrinogenase activity likely contributes to its hemorrhagic activity, which in rat can be completely neutralized in vivo by anti-ammodytagin antibodies, which strongly cross-react with this protein. Has very weak collagen-, ADP- and ristocetin-induced platelet aggregation inhibition activity in vitro. In Vipera ammodytes ammodytes (Western sand viper), this protein is Zinc metalloproteinase-disintegrin-like protein H3.